The primary structure comprises 308 residues: Olfactory receptor 13H1 (308 aa).

At methionine 1–aspartate 25 the chain is on the extracellular side. An N-linked (GlcNAc...) asparagine glycan is attached at asparagine 5. Residues threonine 26–isoleucine 46 form a helical membrane-spanning segment. Residues phenylalanine 47 to asparagine 54 lie on the Cytoplasmic side of the membrane. A helical membrane pass occupies residues leucine 55–threonine 75. Residues alanine 76–alanine 99 are Extracellular-facing. Cysteine 97 and cysteine 188 are disulfide-bonded. Residues glutamine 100–tyrosine 120 form a helical membrane-spanning segment. Over aspartate 121 to proline 139 the chain is Cytoplasmic. Residues valine 140–leucine 159 form a helical membrane-spanning segment. Topologically, residues isoleucine 160–phenylalanine 196 are extracellular. A helical membrane pass occupies residues methionine 197–serine 216. At tyrosine 217–alanine 236 the chain is on the cytoplasmic side. The helical transmembrane segment at phenylalanine 237–methionine 257 threads the bilayer. Residues tyrosine 258–aspartate 270 are Extracellular-facing. Residues lysine 271 to leucine 291 traverse the membrane as a helical segment. The Cytoplasmic segment spans residues arginine 292–threonine 308.

Belongs to the G-protein coupled receptor 1 family.

It localises to the cell membrane. Functionally, odorant receptor. This is Olfactory receptor 13H1 (OR13H1) from Homo sapiens (Human).